Here is a 114-residue protein sequence, read N- to C-terminus: UPF0145 protein YG5714_0873 (114 aa).

It belongs to the UPF0145 family.

In Saccharolobus islandicus (strain Y.G.57.14 / Yellowstone #1) (Sulfolobus islandicus), this protein is UPF0145 protein YG5714_0873.